Reading from the N-terminus, the 195-residue chain is UPF0314 protein RL4541 (195 aa).

4 helical membrane-spanning segments follow: residues 15 to 35 (FWFVACFAVLVIQIAVEYMMG), 64 to 84 (WYTPSHIIHGFLFYGLAHLIL), 127 to 147 (GDSILNSAMDTVFMCVGFFFA), and 150 to 170 (APVALTVAIATFFEIFTGYII).

It belongs to the UPF0314 family.

It is found in the cell membrane. This is UPF0314 protein RL4541 from Rhizobium johnstonii (strain DSM 114642 / LMG 32736 / 3841) (Rhizobium leguminosarum bv. viciae).